Reading from the N-terminus, the 92-residue chain is Small ribosomal subunit protein uS19 (92 aa).

It belongs to the universal ribosomal protein uS19 family.

Protein S19 forms a complex with S13 that binds strongly to the 16S ribosomal RNA. The polypeptide is Small ribosomal subunit protein uS19 (Staphylococcus epidermidis (strain ATCC 35984 / DSM 28319 / BCRC 17069 / CCUG 31568 / BM 3577 / RP62A)).